We begin with the raw amino-acid sequence, 198 residues long: Ribonuclease HII (198 aa).

Positions 2–192 (MYYCGIDEAG…IKKIIDNQKN (191 aa)) constitute an RNase H type-2 domain. Residues D8, E9, and D101 each coordinate a divalent metal cation.

It belongs to the RNase HII family. Requires Mn(2+) as cofactor. Mg(2+) serves as cofactor.

The protein resides in the cytoplasm. It catalyses the reaction Endonucleolytic cleavage to 5'-phosphomonoester.. In terms of biological role, endonuclease that specifically degrades the RNA of RNA-DNA hybrids. The protein is Ribonuclease HII of Natranaerobius thermophilus (strain ATCC BAA-1301 / DSM 18059 / JW/NM-WN-LF).